Consider the following 238-residue polypeptide: NAD(P)H-hydrate epimerase (238 aa).

Positions Ala-11 to Leu-217 constitute a YjeF N-terminal domain. (6S)-NADPHX is bound at residue Asn-61 to Asp-65. Residues Asn-62 and Asp-123 each coordinate K(+). (6S)-NADPHX is bound by residues Gly-127–Ser-133 and Asp-156. Position 159 (Ser-159) interacts with K(+).

Belongs to the NnrE/AIBP family. K(+) serves as cofactor.

Its subcellular location is the cytoplasm. The protein localises to the mitochondrion. It catalyses the reaction (6R)-NADHX = (6S)-NADHX. It carries out the reaction (6R)-NADPHX = (6S)-NADPHX. Catalyzes the epimerization of the S- and R-forms of NAD(P)HX, a damaged form of NAD(P)H that is a result of enzymatic or heat-dependent hydration. This is a prerequisite for the S-specific NAD(P)H-hydrate dehydratase to allow the repair of both epimers of NAD(P)HX. The polypeptide is NAD(P)H-hydrate epimerase (Sclerotinia sclerotiorum (strain ATCC 18683 / 1980 / Ss-1) (White mold)).